Here is a 171-residue protein sequence, read N- to C-terminus: UPF0260 protein Nham_1404 (171 aa).

This sequence belongs to the UPF0260 family.

The chain is UPF0260 protein Nham_1404 from Nitrobacter hamburgensis (strain DSM 10229 / NCIMB 13809 / X14).